Here is an 812-residue protein sequence, read N- to C-terminus: Plasminogen (812 aa).

Residues 1–19 (MDHKEIILLFLLFLKPGQG) form the signal peptide. The PAN domain maps to 20–98 (DSLDGYVSTQ…RDVILFEKRV (79 aa)). 21 disulfides stabilise this stretch: Cys-49–Cys-73, Cys-53–Cys-61, Cys-103–Cys-181, Cys-124–Cys-164, Cys-152–Cys-176, Cys-185–Cys-262, Cys-188–Cys-316, Cys-206–Cys-245, Cys-234–Cys-257, Cys-275–Cys-352, Cys-296–Cys-335, Cys-324–Cys-347, Cys-376–Cys-454, Cys-397–Cys-437, Cys-425–Cys-449, Cys-481–Cys-560, Cys-502–Cys-543, Cys-531–Cys-555, Cys-568–Cys-687, Cys-578–Cys-586, and Cys-609–Cys-625. Kringle domains follow at residues 102–181 (ECKT…IPEC), 184–262 (ECMY…IPRC), 274–352 (QCLK…IPSC), 375–454 (ECYQ…LKRC), and 480–560 (DCMY…IPLC). Positions 582–810 (VVGGCVANPH…YVNWIEREMR (229 aa)) constitute a Peptidase S1 domain. At Ser-598 the chain carries Phosphoserine. Residues His-624 and Asp-667 each act as charge relay system in the active site. A Phosphoserine modification is found at Ser-690. 3 disulfide bridges follow: Cys-701–Cys-768, Cys-731–Cys-747, and Cys-758–Cys-786. Ser-762 serves as the catalytic Charge relay system.

This sequence belongs to the peptidase S1 family. Plasminogen subfamily. As to quaternary structure, interacts (both mature PLG and the angiostatin peptide) with AMOT and CSPG4. Interacts (via the Kringle domains) with HRG; the interaction tethers PLG to the cell surface and enhances its activation. Interacts (via Kringle 4 domain) with ADA; the interaction stimulates PLG activation when in complex with DPP4. Angiostatin: Interacts with ATP5F1A; the interaction inhibits most of the angiogenic effects of angiostatin. In terms of processing, in the presence of the inhibitor, the activation involves only cleavage after Arg-581, yielding two chains held together by two disulfide bonds. In the absence of the inhibitor, the activation involves additionally the removal of the activation peptide.

It is found in the secreted. The enzyme catalyses Preferential cleavage: Lys-|-Xaa &gt; Arg-|-Xaa, higher selectivity than trypsin. Converts fibrin into soluble products.. Converted into plasmin by plasminogen activators, both plasminogen and its activator being bound to fibrin. Cannot be activated with streptokinase. Plasmin dissolves the fibrin of blood clots and acts as a proteolytic factor in a variety of other processes including embryonic development, tissue remodeling, tumor invasion, and inflammation. In ovulation, weakens the walls of the Graafian follicle. It activates the urokinase-type plasminogen activator, collagenases and several complement zymogens, such as C1, C4 and C5. Cleavage of fibronectin and laminin leads to cell detachment and apoptosis. Also cleaves fibrin, thrombospondin and von Willebrand factor. Its role in tissue remodeling and tumor invasion may be modulated by CSPG4. Binds to cells. Functionally, angiostatin is an angiogenesis inhibitor that blocks neovascularization and growth of experimental primary and metastatic tumors in vivo. This Rattus norvegicus (Rat) protein is Plasminogen (Plg).